A 1113-amino-acid chain; its full sequence is Cytospin-A (1113 aa).

Positions 1 to 160 (MKKSVRPAAS…KSKSDGQISD (160 aa)) are disordered. The segment covering 59-103 (ASCNAVSKSKRTTSVGTTASTLDSKPKTASGTTSKRLASSLSKET) has biased composition (polar residues). Positions 145 to 154 (SEGRMSKSKS) are enriched in basic and acidic residues. Residues 220 to 259 (AADVESTLILLQEQNQAIREELNLLKSENRMLKDRLNALG) are a coiled coil. The disordered stretch occupies residues 284–374 (AGSGQSDGGG…RRGSSGNASE (91 aa)). Residues 338–358 (SSDDALDAPSGASSSSESECA) are compositionally biased toward low complexity. Coiled-coil stretches lie at residues 379 to 433 (CLTE…MDSL) and 473 to 791 (MELE…RGRV). 4 disordered regions span residues 766 to 785 (QEKN…RKQD), 832 to 902 (FDSA…PTYP), 914 to 957 (GSAA…DGAS), and 972 to 997 (ALAS…RKDP). Positions 834–845 (SASQGPPSSGAS) are enriched in low complexity. A compositionally biased stretch (pro residues) spans 856–867 (PRTPLSPSPMKT). The segment covering 925-940 (QRVSNMDSTKAISVSR) has biased composition (polar residues). Residues 941–951 (RSSEEMKRDMA) are compositionally biased toward basic and acidic residues. Residues 972–981 (ALASSSPTAS) show a composition bias toward low complexity. The 106-residue stretch at 1007-1112 (GSKRNALLKW…YVTAIYKYFE (106 aa)) folds into the Calponin-homology (CH) domain.

It belongs to the cytospin-A family. In terms of assembly, may interact with both microtubules and actin cytoskeleton.

It localises to the cytoplasm. The protein localises to the cytoskeleton. The protein resides in the spindle. Its subcellular location is the cell junction. It is found in the gap junction. Functionally, involved in cytokinesis and spindle organization. May play a role in actin cytoskeleton organization and microtubule stabilization and hence required for proper cell adhesion and migration. The protein is Cytospin-A (specc1l) of Tetraodon nigroviridis (Spotted green pufferfish).